A 280-amino-acid polypeptide reads, in one-letter code: Merozoite surface protein 2 (280 aa).

Residues 1–20 (MKVIKTLSIINFFIFVTFNI) form the signal peptide. N-linked (GlcNAc...) asparagine glycosylation is found at Asn-22 and Asn-36. A polymorphic region region spans residues 44–206 (ANEGSNTKSV…PQTAENENPA (163 aa)). The segment at 47-242 (GSNTKSVGAN…SQKECTDGNK (196 aa)) is disordered. The interval 51–74 (KSVGANAPKADTIASGSQSSTNSA) is 5 X 12 AA tandem repeats of P-P-I-T-T-T-E-S-N-S-R-S. Residues 64–98 (ASGSQSSTNSASTSTTNNGESQTTTPTAADTPTAT) are compositionally biased toward low complexity. A compositionally biased stretch (polar residues) spans 99–149 (ESNSRSPPITTTESNSRSPPITTTESNSRSPPITTTESNSRSPPITTTESN). Tandem repeats lie at residues 105–116 (PPITTTESNSRS), 117–128 (PPITTTESNSRS), 129–140 (PPITTTESNSRS), and 141–152 (PPITTTESNSRS). Over residues 150-163 (SRSPPITTTESSSS) the composition is skewed to low complexity. Residues 153–160 (PPITTTES) form a 5; partial repeat. An N-linked (GlcNAc...) asparagine glycan is attached at Asn-168. A compositionally biased stretch (basic and acidic residues) spans 170 to 182 (TDGKGEESEKQNE). Residues Asn-184 and Asn-229 are each glycosylated (N-linked (GlcNAc...) asparagine). Residues 233 to 242 (SQKECTDGNK) show a composition bias toward basic and acidic residues. An intrachain disulfide couples Cys-237 to Cys-245. N-linked (GlcNAc...) asparagine glycans are attached at residues Asn-253 and Asn-254. Asn-254 carries the GPI-anchor amidated asparagine lipid modification. The propeptide at 255-280 (SSNIASINKFVVLISATLVLSFAIFI) is removed in mature form.

It is found in the cell membrane. Functionally, may play a role in the merozoite attachment to the erythrocyte. This chain is Merozoite surface protein 2, found in Plasmodium falciparum (isolate K1 / Thailand).